An 830-amino-acid polypeptide reads, in one-letter code: Receptor-like protein kinase HERK 1 (830 aa).

A signal peptide spans 1 to 24; it reads MGIEKFETFILISTISILLCICHG. The Extracellular portion of the chain corresponds to 25 to 405; it reads FTPVDNYLIN…SSSSSKSNLG (381 aa). Asn40, Asn146, Asn217, Asn280, and Asn381 each carry an N-linked (GlcNAc...) asparagine glycan. Residues 406-426 form a helical membrane-spanning segment; that stretch reads LIVGSAIGSLLAVVFLGSCFV. Residues 427–830 are Cytoplasmic-facing; sequence LYKKRKRGQD…FSQLVKSEGR (404 aa). Residues 485–758 enclose the Protein kinase domain; that stretch reads FDESRNIGVG…GDVLWNLEYA (274 aa). Residues 491–499 and Lys513 contribute to the ATP site; that span reads IGVGGFGKV. The Proton acceptor role is filled by Asp609.

The protein belongs to the protein kinase superfamily. Ser/Thr protein kinase family. In terms of processing, autophosphorylated. Expressed in most vegetative tissues, including leaves, stems and roots, especially in cell elongation regions.

The protein localises to the cell membrane. Functionally, receptor-like protein kinase required for cell elongation during vegetative growth, mostly in a brassinosteroid-(BR-) independent manner. This Arabidopsis thaliana (Mouse-ear cress) protein is Receptor-like protein kinase HERK 1 (HERK1).